An 82-amino-acid chain; its full sequence is Sec-independent protein translocase protein TatA (82 aa).

Residues 1-21 (MGGISIWQLLIIAVIVVLLFG) traverse the membrane as a helical segment.

Belongs to the TatA/E family. In terms of assembly, the Tat system comprises two distinct complexes: a TatABC complex, containing multiple copies of TatA, TatB and TatC subunits, and a separate TatA complex, containing only TatA subunits. Substrates initially bind to the TatABC complex, which probably triggers association of the separate TatA complex to form the active translocon.

The protein resides in the cell inner membrane. Its function is as follows. Part of the twin-arginine translocation (Tat) system that transports large folded proteins containing a characteristic twin-arginine motif in their signal peptide across membranes. TatA could form the protein-conducting channel of the Tat system. This Vibrio cholerae serotype O1 (strain ATCC 39315 / El Tor Inaba N16961) protein is Sec-independent protein translocase protein TatA.